A 412-amino-acid polypeptide reads, in one-letter code: 1-deoxy-D-xylulose 5-phosphate reductoisomerase (412 aa).

NADPH contacts are provided by threonine 5, glycine 6, serine 7, isoleucine 8, glycine 31, arginine 32, asparagine 33, and asparagine 125. Position 126 (lysine 126) interacts with 1-deoxy-D-xylulose 5-phosphate. Glutamate 127 contacts NADPH. Aspartate 151 is a Mn(2+) binding site. 4 residues coordinate 1-deoxy-D-xylulose 5-phosphate: serine 152, glutamate 153, serine 189, and histidine 212. Glutamate 153 serves as a coordination point for Mn(2+). Glycine 218 provides a ligand contact to NADPH. 4 residues coordinate 1-deoxy-D-xylulose 5-phosphate: serine 225, asparagine 230, lysine 231, and glutamate 234. Glutamate 234 provides a ligand contact to Mn(2+).

The protein belongs to the DXR family. Mg(2+) serves as cofactor. It depends on Mn(2+) as a cofactor.

The catalysed reaction is 2-C-methyl-D-erythritol 4-phosphate + NADP(+) = 1-deoxy-D-xylulose 5-phosphate + NADPH + H(+). Its pathway is isoprenoid biosynthesis; isopentenyl diphosphate biosynthesis via DXP pathway; isopentenyl diphosphate from 1-deoxy-D-xylulose 5-phosphate: step 1/6. Catalyzes the NADPH-dependent rearrangement and reduction of 1-deoxy-D-xylulose-5-phosphate (DXP) to 2-C-methyl-D-erythritol 4-phosphate (MEP). The sequence is that of 1-deoxy-D-xylulose 5-phosphate reductoisomerase from Prochlorococcus marinus (strain SARG / CCMP1375 / SS120).